The primary structure comprises 862 residues: Taxadiene synthase (862 aa).

Residues 45–66 (RVKMSRGSGGPGPVVMMSSSTG) are disordered. Mg(2+) contacts are provided by D613, D617, N757, T761, and E765. A DDXXD motif motif is present at residues 613-617 (DDMAD).

It belongs to the terpene synthase family. It depends on Mg(2+) as a cofactor.

It catalyses the reaction (2E,6E,10E)-geranylgeranyl diphosphate = taxa-4(5),11(12)-diene + diphosphate. Its pathway is alkaloid biosynthesis; taxol biosynthesis; taxa-4(20),11-dien-5alpha-ol from geranylgeranyl diphosphate: step 1/2. In terms of biological role, catalyzes the cyclization of the ubiquitous isoprenoid intermediate geranylgeranyl diphosphate to taxa-4,11-diene, the parent olefin with a taxane skeleton. This Taxus chinensis (Chinese yew) protein is Taxadiene synthase (TDC1).